A 140-amino-acid polypeptide reads, in one-letter code: Sperm protein associated with the nucleus on the X chromosome N3 (140 aa).

Composition is skewed to polar residues over residues 1–20 (MEQPTSSTNGEKTKSPCKSN), 62–79 (INSNQLENDQSQENSINP), and 131–140 (EGSSQDSGED). A disordered region spans residues 1 to 140 (MEQPTSSTNG…EGSSQDSGED (140 aa)).

It belongs to the SPAN-X family.

The protein is Sperm protein associated with the nucleus on the X chromosome N3 (SPANXN3) of Pan troglodytes (Chimpanzee).